The following is a 106-amino-acid chain: Small ribosomal subunit protein bS16 (106 aa).

This sequence belongs to the bacterial ribosomal protein bS16 family.

The polypeptide is Small ribosomal subunit protein bS16 (Wolbachia pipientis wMel).